The sequence spans 403 residues: Keratin, type I cytoskeletal 19 (403 aa).

The interval methionine 1–asparagine 82 is head. An Omega-N-methylarginine modification is found at arginine 7. A phosphoserine mark is found at serine 14 and serine 22. Arginine 24 bears the Asymmetric dimethylarginine; alternate mark. Arginine 24 bears the Omega-N-methylarginine; alternate mark. Serine 27 is subject to Phosphoserine. Arginine 32 carries the post-translational modification Omega-N-methylarginine. Phosphoserine occurs at positions 35 and 40. Residues arginine 43 and arginine 51 each carry the omega-N-methylarginine modification. Serine 57 carries the post-translational modification Phosphoserine. Arginine 64 is subject to Omega-N-methylarginine. Residues serine 67 and serine 75 each carry the phosphoserine modification. The coil 1A stretch occupies residues glutamate 83 to tryptophan 118. Residues glutamate 83 to tyrosine 394 enclose the IF rod domain. Positions tyrosine 119 to threonine 136 are linker 1. The interval isoleucine 137–leucine 228 is coil 1B. Residues arginine 229 to isoleucine 251 form a linker 12 region. Positions aspartate 247–histidine 393 are necessary for interaction with PNN. The segment at leucine 252–glutamine 390 is coil 2. Threonine 326 carries the phosphothreonine modification. The rod-like helical tail stretch occupies residues glutamate 391–isoleucine 403. Residue tyrosine 394 is modified to Phosphotyrosine.

The protein belongs to the intermediate filament family. In terms of assembly, heterotetramer of two type I and two type II keratins. Interacts with PNN and the actin-binding domain of DMD.

Involved in the organization of myofibers. Together with KRT8, helps to link the contractile apparatus to dystrophin at the costameres of striated muscle. The protein is Keratin, type I cytoskeletal 19 (Krt19) of Mus musculus (Mouse).